We begin with the raw amino-acid sequence, 221 residues long: Putative hemin import ATP-binding protein HrtA (221 aa).

The ABC transporter domain maps to 3 to 221 (LQLKHITKTF…IEIQDGKIEL (219 aa)). 39 to 46 (GASGSGKS) contacts ATP.

This sequence belongs to the ABC transporter superfamily. HrtA family. As to quaternary structure, the complex is composed of two ATP-binding proteins (HrtA), two transmembrane proteins (HrtB) and a solute-binding protein.

It localises to the cell membrane. Part of the ABC transporter complex hrt involved in hemin import. Responsible for energy coupling to the transport system. The chain is Putative hemin import ATP-binding protein HrtA (hrtA) from Staphylococcus haemolyticus (strain JCSC1435).